The primary structure comprises 103 residues: ATP synthase F(0) complex subunit g, mitochondrial (103 aa).

Ala-2 carries the N-acetylalanine modification. Lys-11, Lys-24, Lys-35, and Lys-54 each carry N6-acetyllysine.

The protein belongs to the ATPase g subunit family. In terms of assembly, component of the ATP synthase complex composed at least of ATP5F1A/subunit alpha, ATP5F1B/subunit beta, ATP5MC1/subunit c (homooctomer), MT-ATP6/subunit a, MT-ATP8/subunit 8, ATP5ME/subunit e, ATP5MF/subunit f, ATP5MG/subunit g, ATP5MK/subunit k, ATP5MJ/subunit j, ATP5F1C/subunit gamma, ATP5F1D/subunit delta, ATP5F1E/subunit epsilon, ATP5PF/subunit F6, ATP5PB/subunit b, ATP5PD/subunit d, ATP5PO/subunit OSCP. ATP synthase complex consists of a soluble F(1) head domain (subunits alpha(3) and beta(3)) - the catalytic core - and a membrane F(0) domain - the membrane proton channel (subunits c, a, 8, e, f, g, k and j). These two domains are linked by a central stalk (subunits gamma, delta, and epsilon) rotating inside the F1 region and a stationary peripheral stalk (subunits F6, b, d, and OSCP).

Its subcellular location is the mitochondrion. The protein localises to the mitochondrion inner membrane. Subunit g, of the mitochondrial membrane ATP synthase complex (F(1)F(0) ATP synthase or Complex V) that produces ATP from ADP in the presence of a proton gradient across the membrane which is generated by electron transport complexes of the respiratory chain. ATP synthase complex consist of a soluble F(1) head domain - the catalytic core - and a membrane F(1) domain - the membrane proton channel. These two domains are linked by a central stalk rotating inside the F(1) region and a stationary peripheral stalk. During catalysis, ATP synthesis in the catalytic domain of F(1) is coupled via a rotary mechanism of the central stalk subunits to proton translocation. In vivo, can only synthesize ATP although its ATP hydrolase activity can be activated artificially in vitro. Part of the complex F(0) domain. In Pongo abelii (Sumatran orangutan), this protein is ATP synthase F(0) complex subunit g, mitochondrial.